The sequence spans 410 residues: Trans-splicing factor Raa2, chloroplastic (410 aa).

Disordered regions lie at residues 1–40 (MRTR…QRPA) and 56–106 (AADH…QQQV). The transit peptide at 1–46 (MRTRAGAFFGKQRSTSPSGSSTSASRQWLRSSPGRTQRPAAHRVLA) directs the protein to the chloroplast. Low complexity predominate over residues 14 to 25 (STSPSGSSTSAS). Residues 26–35 (RQWLRSSPGR) are compositionally biased toward polar residues. A compositionally biased stretch (low complexity) spans 96–106 (RQAQRRQQQQV).

The protein belongs to the pseudouridine synthase TruB family. Possibly associated with other factors required for trans-splicing.

It is found in the plastid. It localises to the chloroplast. Required for trans-splicing of exons 2 and 3 of the chloroplast encoded psaA mRNA (a group II intron). It is not known if this protein has pseudouridine activity; mutation of the potential active site residue does not cause loss of trans-splicing. The protein is Trans-splicing factor Raa2, chloroplastic (RAA2) of Chlamydomonas reinhardtii (Chlamydomonas smithii).